The chain runs to 119 residues: NADH-ubiquinone oxidoreductase chain 3 (119 aa).

The next 3 helical transmembrane spans lie at 8–28, 63–83, and 88–108; these read IFIY…VPFL, LVSI…PWAV, and IDLF…IGFL.

Belongs to the complex I subunit 3 family.

It localises to the mitochondrion membrane. It catalyses the reaction a ubiquinone + NADH + 5 H(+)(in) = a ubiquinol + NAD(+) + 4 H(+)(out). Its function is as follows. Core subunit of the mitochondrial membrane respiratory chain NADH dehydrogenase (Complex I) that is believed to belong to the minimal assembly required for catalysis. Complex I functions in the transfer of electrons from NADH to the respiratory chain. The immediate electron acceptor for the enzyme is believed to be ubiquinone. The polypeptide is NADH-ubiquinone oxidoreductase chain 3 (ND3) (Brassica napus (Rape)).